The chain runs to 503 residues: Glutamate--tRNA ligase (503 aa).

The short motif at 15-25 is the 'HIGH' region element; it reads PSPTGHLHVGG. The 'KMSKS' region motif lies at 262 to 266; it reads KLSKR. K265 contributes to the ATP binding site.

Belongs to the class-I aminoacyl-tRNA synthetase family. Glutamate--tRNA ligase type 1 subfamily. As to quaternary structure, monomer.

The protein resides in the cytoplasm. The enzyme catalyses tRNA(Glu) + L-glutamate + ATP = L-glutamyl-tRNA(Glu) + AMP + diphosphate. Catalyzes the attachment of glutamate to tRNA(Glu) in a two-step reaction: glutamate is first activated by ATP to form Glu-AMP and then transferred to the acceptor end of tRNA(Glu). In Chlorobium phaeobacteroides (strain BS1), this protein is Glutamate--tRNA ligase.